A 230-amino-acid polypeptide reads, in one-letter code: Ureidoacrylate amidohydrolase RutB (230 aa).

Aspartate 24 acts as the Proton acceptor in catalysis. Lysine 133 is a catalytic residue. Cysteine 166 serves as the catalytic Nucleophile.

It belongs to the isochorismatase family. RutB subfamily.

It carries out the reaction (Z)-3-ureidoacrylate + H2O + H(+) = (Z)-3-aminoacrylate + NH4(+) + CO2. It catalyses the reaction (Z)-3-ureidoacrylate + H2O = (Z)-3-aminoacrylate + carbamate + H(+). The enzyme catalyses (Z)-2-methylureidoacrylate + H2O + H(+) = (Z)-2-methylaminoacrylate + NH4(+) + CO2. In terms of biological role, hydrolyzes ureidoacrylate to form aminoacrylate and carbamate. The carbamate hydrolyzes spontaneously, thereby releasing one of the nitrogen atoms of the pyrimidine ring as ammonia and one of its carbon atoms as CO2. The protein is Ureidoacrylate amidohydrolase RutB of Escherichia coli O127:H6 (strain E2348/69 / EPEC).